The chain runs to 399 residues: Succinate--CoA ligase [ADP-forming] subunit beta (399 aa).

Positions 9–254 constitute an ATP-grasp domain; it reads KELLAKYGVG…ETEEDPAEIE (246 aa). ATP-binding positions include lysine 46, 53–55, valine 112, and glutamate 117; that span reads GRG. Mg(2+) contacts are provided by asparagine 209 and aspartate 223. Residues asparagine 274 and 331 to 333 contribute to the substrate site; that span reads GIM.

This sequence belongs to the succinate/malate CoA ligase beta subunit family. Heterotetramer of two alpha and two beta subunits. It depends on Mg(2+) as a cofactor.

The enzyme catalyses succinate + ATP + CoA = succinyl-CoA + ADP + phosphate. It catalyses the reaction GTP + succinate + CoA = succinyl-CoA + GDP + phosphate. It functions in the pathway carbohydrate metabolism; tricarboxylic acid cycle; succinate from succinyl-CoA (ligase route): step 1/1. Succinyl-CoA synthetase functions in the citric acid cycle (TCA), coupling the hydrolysis of succinyl-CoA to the synthesis of either ATP or GTP and thus represents the only step of substrate-level phosphorylation in the TCA. The beta subunit provides nucleotide specificity of the enzyme and binds the substrate succinate, while the binding sites for coenzyme A and phosphate are found in the alpha subunit. The chain is Succinate--CoA ligase [ADP-forming] subunit beta from Novosphingobium aromaticivorans (strain ATCC 700278 / DSM 12444 / CCUG 56034 / CIP 105152 / NBRC 16084 / F199).